The primary structure comprises 605 residues: Insulin-like growth factor-binding protein complex acid labile subunit (605 aa).

A signal peptide spans 1-27; that stretch reads MALRKGGLALALLLLSWVALGPRSLEG. An LRRNT domain is found at 32–74; that stretch reads TPGEAEGPACPATCACSYDDEVNELSVFCSSRNLTRLPDGIPG. 2 cysteine pairs are disulfide-bonded: Cys-41–Cys-47 and Cys-45–Cys-60. 3 N-linked (GlcNAc...) asparagine glycosylation sites follow: Asn-64, Asn-85, and Asn-96. LRR repeat units follow at residues 75-96, 99-120, 123-144, 147-168, 171-192, 195-216, 219-240, 243-264, 267-288, 291-312, 315-336, 339-360, 363-384, 387-408, 411-432, 435-456, 459-480, 483-504, and 507-528; these read GTQA…AFRN, SLAF…ALLG, NLCH…TFAY, ALAL…LFEG, NLWD…AFRG, GLRE…LFSG, ELRE…VFAQ, RLQK…AFLG, ALRW…TFPG, GLRV…TFED, FLEE…SFEG, QLEV…AFLG, NVAV…VFRG, KLHS…TFAG, GLRR…SLWG, ELLE…LFQG, KLEY…ALGP, RAFW…LLAS, and RLRY…PPGL. N-linked (GlcNAc...) asparagine glycosylation is present at Asn-368. Residue Asn-515 is glycosylated (N-linked (GlcNAc...) asparagine). An LRRCT domain is found at 536-605; the sequence is NPWDCSCPLK…DLGEAHFAPC (70 aa). 3 cysteine pairs are disulfide-bonded: Cys-540–Cys-583, Cys-542–Cys-605, and Cys-566–Cys-571. Asn-580 is a glycosylation site (N-linked (GlcNAc...) asparagine).

As to quaternary structure, forms a ternary complex with IGF1 and IGFBP3.

It localises to the secreted. The protein resides in the extracellular space. Functionally, involved in protein-protein interactions that result in protein complexes, receptor-ligand binding or cell adhesion. In Papio hamadryas (Hamadryas baboon), this protein is Insulin-like growth factor-binding protein complex acid labile subunit (IGFALS).